The sequence spans 185 residues: Large ribosomal subunit protein uL5 (185 aa).

Belongs to the universal ribosomal protein uL5 family. As to quaternary structure, part of the 50S ribosomal subunit; part of the 5S rRNA/L5/L18/L25 subcomplex. Contacts the 5S rRNA and the P site tRNA. Forms a bridge to the 30S subunit in the 70S ribosome.

Its function is as follows. This is one of the proteins that bind and probably mediate the attachment of the 5S RNA into the large ribosomal subunit, where it forms part of the central protuberance. In the 70S ribosome it contacts protein S13 of the 30S subunit (bridge B1b), connecting the 2 subunits; this bridge is implicated in subunit movement. Contacts the P site tRNA; the 5S rRNA and some of its associated proteins might help stabilize positioning of ribosome-bound tRNAs. This is Large ribosomal subunit protein uL5 from Caulobacter vibrioides (strain NA1000 / CB15N) (Caulobacter crescentus).